A 413-amino-acid polypeptide reads, in one-letter code: MIEETHPNDDSYIVRVKAVVMTRDDSSGGWLAQEGGGLSRVGVCKVMPAELTGRSDFLIHGERLKDKQVILECFVRKDLIYTKATPTFHHWKVDNKKCGLTFQSPADARAFDRGVRKALEDLTEGSTTSSSTLQNEAELGDDDVFTTATDSSSNSSQKKDHSTQLVATSTFYEPHPHRCILQYRPPERYTLDQKFSRNLFPFEDEEIVRINPRERWMITGYEDYRYAAVPDKFIQPEDSDSYVQISKNDPVKHDYTYPYVPSPDFTQCDLKRPCGGGSTVVSTQPRAFILKGKRRKEDGERSRCVYCRDMFNHEENRRGQCHDAPDPIRTCIHRVSFMWCADSMLYHCMSDPEGDYSDPCSCDTSEERFCLRWTALLGLAMLAPCLCCYPPLHGCHRCGVACGCCGGKHKAVG.

One can recognise a WH1 domain in the interval 5–122 (THPNDDSYIV…RGVRKALEDL (118 aa)). The disordered stretch occupies residues 122–163 (LTEGSTTSSSTLQNEAELGDDDVFTTATDSSSNSSQKKDHST). The region spanning 195–248 (FSRNLFPFEDEEIVRINPRERWMITGYEDYRYAAVPDKFIQPEDSDSYVQISKN) is the KBD domain. Residues 303 to 411 (RCVYCRDMFN…CGCCGGKHKA (109 aa)) form the SPR domain.

The protein localises to the cell membrane. It is found in the cytoplasmic vesicle. It localises to the secretory vesicle membrane. Its subcellular location is the cytoplasm. Functionally, negatively regulates Ras signaling pathways and downstream activation of MAP kinases. The chain is Sprouty-related, EVH1 domain-containing protein 2 (spred2) from Danio rerio (Zebrafish).